The chain runs to 121 residues: Phospholipase A2 homolog EPL_00195 (121 aa).

7 cysteine pairs are disulfide-bonded: Cys25–Cys114, Cys27–Cys43, Cys42–Cys94, Cys48–Cys121, Cys49–Cys87, Cys56–Cys80, and Cys74–Cys85. Residues Lys104 to Gly116 are important for membrane-damaging activities in eukaryotes and bacteria; heparin-binding.

The protein belongs to the phospholipase A2 family. Group II subfamily. S49 sub-subfamily. Monomer. In terms of tissue distribution, expressed by the venom gland.

The protein resides in the secreted. Functionally, snake venom phospholipase A2 homolog that lacks enzymatic activity. Shows high myotoxin activities and displays edema-inducing activities. Has cytotoxic activities against HUVEC cells (LC(50)=2.5 uL) and human lung adenocarcinoma A549 cells (LC(50)=2.9 uL). In Echis pyramidum leakeyi (Leakey's carpet viper), this protein is Phospholipase A2 homolog EPL_00195.